Consider the following 474-residue polypeptide: MFRVKIISQKRTKSVQMLENDQLDILGQQPSLYKLYTQICSIYRVPDPSAHDHIVNTLTRGLETLAKNFQWLAGNVVNEGADEGNTGTYRIVPSDKIPLIVQDLREDLSAPTMDSLEKADFPIYMLDEKTFAPCMTINPPGNTIGMAAKSGPVFAVQANFISGGLVLTIVGQHNIMDITGQESIINLLNKSCHQKPFSDEELLIGNIDKSKSIPLFDETWEPDTTLVHEIVETSRNTSGEEKEQSCSSNSTWAYVEFSAISLQNLRILAMQTCTSGTKFVSTDDIVTAFIWKSVSRARLSRLKPETKSNLGRAVDVRKRLGLPETYPGLLVNMTFNTGSLKSLDHKSLGVLASQIRRKLDPKVFDLAYNTCALATLLSRCPDKTKVSIPQPIDTLSGIMVSSWAKVSLYDVDFNLGLGKPKSVRRPRFISLESLIYFMPRSSRGEMVVALCLRDKDWECLNADKEWTNYATHIG.

The protein belongs to the trichothecene 3-O-acetyltransferase family.

Functionally, trichothecene 3-O-acetyltransferase involved in self-protection against trichothecenes, mycotoxins acting as eukaryotic protein synthesis inhibitors. Its existence is surprising in a non-trichothecene producer organism which needs no self-protection again endogenic trichothecenes. The persistence of this non-essential gene may be due to a selective advantage that it may confer, like a resistance to exogenic trichothecenes. The polypeptide is Trichothecene 3-O-acetyltransferase (AYT1) (Saccharomyces cerevisiae (strain ATCC 204508 / S288c) (Baker's yeast)).